A 223-amino-acid polypeptide reads, in one-letter code: Peptidyl-prolyl cis-trans isomerase, mitochondrial (223 aa).

The transit peptide at 1–44 (MFGPRHFSVLKTTGSLVSSTFSSSLKPTATFSCARAFSQTSSIM) directs the protein to the mitochondrion. Residues 62–222 (NKPTSEIKAQ…KKPTIVDCGA (161 aa)) form the PPIase cyclophilin-type domain.

It belongs to the cyclophilin-type PPIase family.

It localises to the mitochondrion. It is found in the cytoplasm. The enzyme catalyses [protein]-peptidylproline (omega=180) = [protein]-peptidylproline (omega=0). Binds cyclosporin A (CsA). CsA mediates some of its effects via an inhibitory action on PPIase. In terms of biological role, PPIases accelerate the folding of proteins. It catalyzes the cis-trans isomerization of proline imidic peptide bonds in oligopeptides. This Neurospora crassa (strain ATCC 24698 / 74-OR23-1A / CBS 708.71 / DSM 1257 / FGSC 987) protein is Peptidyl-prolyl cis-trans isomerase, mitochondrial (csr-1).